Here is a 71-residue protein sequence, read N- to C-terminus: MNMSLETRINDLETRLAFQDDTIQALNDVLVAQQRVVERLQMQLEALAKRQEELIEEFGSVDDDGAPPPHY.

The protein belongs to the SlyX family.

The protein is Protein SlyX homolog of Azotobacter vinelandii (strain DJ / ATCC BAA-1303).